Here is a 456-residue protein sequence, read N- to C-terminus: FAD-dependent monooxygenase sor5 (456 aa).

The helical transmembrane segment at 18–38 (PLEVAIVGGGLTGLALALGLL) threads the bilayer. Asn-43 carries an N-linked (GlcNAc...) asparagine glycan. The FAD site is built by Glu-48 and Arg-119. Residue Arg-200 is part of the active site. Residues Asp-331 and Ala-344 each contribute to the FAD site.

This sequence belongs to the paxM FAD-dependent monooxygenase family. FAD is required as a cofactor.

Its subcellular location is the membrane. The protein operates within secondary metabolite biosynthesis. Its function is as follows. FAD-dependent monooxygenase; part of the SOR gene cluster that mediates the biosynthesis of sorbicillinoids, a diverse group of yellow secondary metabolites that restrict growth of competing pathogenic fungi but not of bacteria. Sorbicillinoids biosynthesis requires the action of two PKSs. The SOR cluster is required for the production of trichodimerol and dihydrotrichotetronin, with sor2 being sufficient for production of trichodimerol, but not dihydrotrichotetronin in the light. Sor1 iteratively combines three acetyl units and the growing chain is modified by the ketoacyl reductase subunit, and optional by the enoyl reductase subunit in the second cycle. The polyketide is then handed over to the PKS sor2, which adds three more acetyl units, and two methyl groups. Sor2 releases an aldehyde, which undergoes spontaneous cyclization resulting in the formation of sorbicillin or 2',3'-dihydrosorbicillin. The monooxygenase sor5 oxidizes sorbicillin and 2',3'-dihydrosorbicillin to 2',3'-dihydrosorbicillinol and sorbicillinol, respectively. The oxidoreductase sor8 further converts sorbicillinol into oxosorbicillinol. Sorbicillinol is the building block for the other sorbicillinoids such as disorbicillinol, bisvertinolon, dihydrobisvertinolone, and dihydrotrichotetronine. In Hypocrea jecorina (strain QM6a) (Trichoderma reesei), this protein is FAD-dependent monooxygenase sor5.